The chain runs to 69 residues: Large ribosomal subunit protein bL31 (69 aa).

Positions 16, 18, 38, and 41 each coordinate Zn(2+).

It belongs to the bacterial ribosomal protein bL31 family. Type A subfamily. Part of the 50S ribosomal subunit. Zn(2+) serves as cofactor.

Binds the 23S rRNA. The polypeptide is Large ribosomal subunit protein bL31 (Thermobifida fusca (strain YX)).